The sequence spans 344 residues: 5,10-methenyltetrahydromethanopterin hydrogenase (344 aa).

It belongs to the HMD family. Homotetramer.

The enzyme catalyses 5,10-methenyl-5,6,7,8-tetrahydromethanopterin + H2 = 5,10-methylenetetrahydromethanopterin + H(+). It participates in one-carbon metabolism; methanogenesis from CO(2); 5,10-methylene-5,6,7,8-tetrahydromethanopterin from 5,10-methenyl-5,6,7,8-tetrahydromethanopterin (hydrogen route): step 1/1. Activity requires salt; 100 mM sodium or potassium salts of chloride, phosphate or sulfate are equally effective. Inactivated by O(2). In terms of biological role, catalyzes the reversible reduction of methenyl-H(4)MPT(+) to methylene-H(4)MPT. In Methanothermobacter marburgensis (strain ATCC BAA-927 / DSM 2133 / JCM 14651 / NBRC 100331 / OCM 82 / Marburg) (Methanobacterium thermoautotrophicum), this protein is 5,10-methenyltetrahydromethanopterin hydrogenase.